Here is a 261-residue protein sequence, read N- to C-terminus: Enolase-phosphatase E1 (261 aa).

Residues Asp16 and Glu18 each coordinate Mg(2+). Substrate is bound by residues 153-154 (SS) and Lys187. Residue Asp212 coordinates Mg(2+).

Belongs to the HAD-like hydrolase superfamily. MasA/MtnC family. As to quaternary structure, monomer. Mg(2+) serves as cofactor.

The protein localises to the cytoplasm. It is found in the nucleus. The catalysed reaction is 5-methylsulfanyl-2,3-dioxopentyl phosphate + H2O = 1,2-dihydroxy-5-(methylsulfanyl)pent-1-en-3-one + phosphate. The protein operates within amino-acid biosynthesis; L-methionine biosynthesis via salvage pathway; L-methionine from S-methyl-5-thio-alpha-D-ribose 1-phosphate: step 3/6. It functions in the pathway amino-acid biosynthesis; L-methionine biosynthesis via salvage pathway; L-methionine from S-methyl-5-thio-alpha-D-ribose 1-phosphate: step 4/6. Functionally, bifunctional enzyme that catalyzes the enolization of 2,3-diketo-5-methylthiopentyl-1-phosphate (DK-MTP-1-P) into the intermediate 2-hydroxy-3-keto-5-methylthiopentenyl-1-phosphate (HK-MTPenyl-1-P), which is then dephosphorylated to form the acireductone 1,2-dihydroxy-3-keto-5-methylthiopentene (DHK-MTPene). The chain is Enolase-phosphatase E1 (enoph1) from Danio rerio (Zebrafish).